Consider the following 282-residue polypeptide: Biotin synthase (282 aa).

Residues 1 to 228 (MQEIFLCSIS…NARLMVAGGR (228 aa)) enclose the Radical SAM core domain. [4Fe-4S] cluster-binding residues include cysteine 17, cysteine 21, and cysteine 24. Cysteine 61, cysteine 96, cysteine 154, and arginine 221 together coordinate [2Fe-2S] cluster.

It belongs to the radical SAM superfamily. Biotin synthase family. In terms of assembly, homodimer. [4Fe-4S] cluster serves as cofactor. Requires [2Fe-2S] cluster as cofactor.

The catalysed reaction is (4R,5S)-dethiobiotin + (sulfur carrier)-SH + 2 reduced [2Fe-2S]-[ferredoxin] + 2 S-adenosyl-L-methionine = (sulfur carrier)-H + biotin + 2 5'-deoxyadenosine + 2 L-methionine + 2 oxidized [2Fe-2S]-[ferredoxin]. It functions in the pathway cofactor biosynthesis; biotin biosynthesis; biotin from 7,8-diaminononanoate: step 2/2. Catalyzes the conversion of dethiobiotin (DTB) to biotin by the insertion of a sulfur atom into dethiobiotin via a radical-based mechanism. This Helicobacter pylori (strain J99 / ATCC 700824) (Campylobacter pylori J99) protein is Biotin synthase.